A 623-amino-acid chain; its full sequence is MLKLLCLLLPLVAVSASPIDLGSQKDYLVLDLPGLSHLSETQRPTMHAGLLPLNLSFVADDDTEYFFWRFSKQDVDRADIVFWLNGGPGCSSMDGALMELGPFVINPKQEVEYNEGTWVEAADVVFVDQPGGTGFSSTTNYLTELTEVADGFVTFLARYFHLFPADVYKKFTLGGESYAGQYVPYILKAIMDDLKSDSGQLPKELYLKGALIGNGWIDPNEQSLSYLEFFIKKELIDIHGSYMPGLLQQQEKCQNLINHSSGEASESQISYSACEKILNDALRFTRDKKAPLDQQCINMYDYTLRDTYPSCGMSWPPYLPDVTAFLQKKSVLEALHLDSSASWSECSARVGSHLKNKISVPSVDILPDLLQEIPIILFNGDHDIICNCIGTERMIDKLEFNGDQGFTEGTEYIPWFYNEVNVGKVISERNLTYVRVYNSSHMVPFDNTPVSRGLLDIYFDNFEDVEYNNVSGIATPVYDVDKNITYIDSNDPRLQNGPKSSSTDDSAAHGNPFFYYVFELFVIVLLLCGLVYLYQYYSNSAPHSILADKHKKKSKNKSKNVRFLDDLESNLDLDNTDDKKDNSVMSKLLSSMGYQAQEPYKPLDKGANADLDIEMDSHGTSEK.

The signal sequence occupies residues M1 to A16. Over S17–P512 the chain is Lumenal. The N-linked (GlcNAc...) asparagine glycan is linked to N54. S177 is an active-site residue. N258 carries an N-linked (GlcNAc...) asparagine glycan. The active site involves D383. Residues N430 and N438 are each glycosylated (N-linked (GlcNAc...) asparagine). The active site involves H441. N-linked (GlcNAc...) asparagine glycans are attached at residues N469 and N483. Residues F513 to L533 traverse the membrane as a helical segment. Residues Y534–K623 lie on the Cytoplasmic side of the membrane. The disordered stretch occupies residues Q597–K623.

This sequence belongs to the peptidase S10 family.

Its subcellular location is the golgi apparatus. It localises to the trans-Golgi network membrane. The catalysed reaction is Preferential release of a C-terminal arginine or lysine residue.. Protease with a carboxypeptidase B-like function involved in the C-terminal processing of the lysine and arginine residues from protein precursors. Promotes cell fusion and is involved in the programmed cell death. The chain is Pheromone-processing carboxypeptidase KEX1 (KEX1) from Komagataella phaffii (strain GS115 / ATCC 20864) (Yeast).